We begin with the raw amino-acid sequence, 492 residues long: Ketol-acid reductoisomerase (NADP(+)) (492 aa).

In terms of domain architecture, KARI N-terminal Rossmann spans 15–208 (AQLGKCRFMA…GGDRAGVLES (194 aa)). NADP(+) contacts are provided by residues 45 to 48 (CGAQ), Arg-68, Arg-76, Ser-78, and 108 to 110 (DKQ). His-132 is a catalytic residue. Gly-158 provides a ligand contact to NADP(+). KARI C-terminal knotted domains are found at residues 209-344 (SFVA…KAPP) and 345-485 (FEGK…MTDM). Mg(2+) is bound by residues Asp-217, Glu-221, Glu-389, and Glu-393. Ser-414 lines the substrate pocket.

It belongs to the ketol-acid reductoisomerase family. Mg(2+) serves as cofactor.

The enzyme catalyses (2R)-2,3-dihydroxy-3-methylbutanoate + NADP(+) = (2S)-2-acetolactate + NADPH + H(+). It catalyses the reaction (2R,3R)-2,3-dihydroxy-3-methylpentanoate + NADP(+) = (S)-2-ethyl-2-hydroxy-3-oxobutanoate + NADPH + H(+). It functions in the pathway amino-acid biosynthesis; L-isoleucine biosynthesis; L-isoleucine from 2-oxobutanoate: step 2/4. It participates in amino-acid biosynthesis; L-valine biosynthesis; L-valine from pyruvate: step 2/4. Involved in the biosynthesis of branched-chain amino acids (BCAA). Catalyzes an alkyl-migration followed by a ketol-acid reduction of (S)-2-acetolactate (S2AL) to yield (R)-2,3-dihydroxy-isovalerate. In the isomerase reaction, S2AL is rearranged via a Mg-dependent methyl migration to produce 3-hydroxy-3-methyl-2-ketobutyrate (HMKB). In the reductase reaction, this 2-ketoacid undergoes a metal-dependent reduction by NADPH to yield (R)-2,3-dihydroxy-isovalerate. The polypeptide is Ketol-acid reductoisomerase (NADP(+)) (Edwardsiella ictaluri (strain 93-146)).